The chain runs to 545 residues: Chaperonin GroEL (545 aa).

ATP is bound by residues 30-33 (TLGP), Lys-51, 87-91 (DGTTT), Gly-415, 479-481 (NAA), and Asp-495. The disordered stretch occupies residues 526–545 (KDDAPAPAMPDMGGMGGMGM).

Belongs to the chaperonin (HSP60) family. In terms of assembly, forms a cylinder of 14 subunits composed of two heptameric rings stacked back-to-back. Interacts with the co-chaperonin GroES.

The protein resides in the cytoplasm. It catalyses the reaction ATP + H2O + a folded polypeptide = ADP + phosphate + an unfolded polypeptide.. In terms of biological role, together with its co-chaperonin GroES, plays an essential role in assisting protein folding. The GroEL-GroES system forms a nano-cage that allows encapsulation of the non-native substrate proteins and provides a physical environment optimized to promote and accelerate protein folding. This is Chaperonin GroEL from Paracidovorax citrulli (strain AAC00-1) (Acidovorax citrulli).